The sequence spans 160 residues: MAFFVKNMISNQVKNLGFGGGSEEKKEEGGTSDPAAAKGMTREEYEEYQKQMIEEKMERDAAFTQKKAERACLRVHLRDKYRLPKSEMDETQIQLAGDDVDLPEDLRKMVDEDQDEEEEKDSILGQLQNLQNMDLDTIKEKAQATFTEIKQSAEQKCSVM.

The tract at residues 14–44 (KNLGFGGGSEEKKEEGGTSDPAAAKGMTREE) is disordered. A Cysteine methyl ester modification is found at cysteine 157. Cysteine 157 carries S-farnesyl cysteine lipidation. Positions 158-160 (SVM) are cleaved as a propeptide — removed in mature form.

The protein belongs to the complexin/synaphin family. As to quaternary structure, weakly binds to the SNARE core complex containing SNAP25, VAMP2 and STX1A. Post-translationally, farnesylation mediates presynaptic targeting and is important for function in neurotransmitter release. As to expression, present specifically in the retina (at protein level). Expressed in the outer nuclear layer of the retina (at protein level). Strongly expressed at rod photoreceptor ribbon synapses (at protein level). Not expressed at conventional amacrine cell synapses, nor at cone photoreceptor ribbon synapses (at protein level). Weakly expressed at cone photoreceptor synaptic terminals (at protein level). Not expressed in the brain (at protein level).

Its subcellular location is the synapse. It is found in the cell membrane. Functionally, complexin that regulates SNARE protein complex-mediated synaptic vesicle fusion. Required for the maintenance of synaptic ultrastructure in the adult retina. Positively regulates synaptic transmission through synaptic vesicle availability and exocytosis of neurotransmitters at photoreceptor ribbon synapses in the retina. Suppresses tonic photoreceptor activity and baseline 'noise' by suppression of Ca(2+) vesicle tonic release and the facilitation of evoked synchronous and asynchronous Ca(2+) vesicle release. This chain is Complexin-4 (Cplx4), found in Mus musculus (Mouse).